The following is an 863-amino-acid chain: MTENRDNKTSQSEKTTQKKKKKKFKAFKIILITFITLIVISLVTAIGITLAIIKTSPDININEIIAASDASKIYDDKGELVDSIITSKKKILVKYDEVPENLINAFVSIEDERFFKHSGIDVKRIAGAFLIDMKNIVSGKPALQGASTITQQLIKNTVFETHGNSLNDKLRRKVQEWYLAPKLEKEVGKKSIMEAYLNTIYLGGRAIGVGAAADQYFNVSIDKLDLVQCAFIAGLPQSPSVYYPYSRTSKKDPSKYINRTKTVLAKMKENGYISQNEYISALAELDTSKSTVTNDESIQTLGQYTIHKPTNIDEKYNFEWFTRPAIERVKKDLKDIYNYSDDEIEKLLVNGNLKIYTTMNKDLQVSTQEIIDNDEKLNSLSSSKNNLVEPQASAVLTDYHTGEVKVIIGGRGTQPALAYNRATNAKVAAGSSIKPLTVYSAAIDSKLATAATVLEDSPLPEAMSKKYSAPGTNWQPKNANGVYSGYLGLRDALKNSVNVYAVKLEDKIGLNTGVKYGEKFGLTFDNVDKNSMAAIALGELNRGTNTFTMANAYGVFGNNGMYSNPRLYTKVLDRNGNVLLETKTQATQVISPEAAYIMYDLLKGPVKEGTATRIQHTYHSDIPIAGKTGSSTKFKNLWFCGLTPYYSGAVWIENKYGQSIYSSDAAALFGKIMNRAVENLPEKEIEMPEGIIKAEVDRVSGLLPTDLSYKDPRGSQVYTELFIKGTVPTEQDNIHVSTKVNKYNGRVSGSYTPSFLTESKVFIKRQSDSEVPLDDDMYVLPDKDKKSSNKSKHNHNNDAKHDNTNNSEDATNEASTEPSPNTDTVPEDSTNNLDPTKNTEKKPSDKKNKKHVIKPIIRPKKHF.

At Met1 to Lys28 the chain is on the cytoplasmic side. The chain crosses the membrane as a helical; Signal-anchor for type II membrane protein span at residues Ile29–Thr49. Residues Leu50 to Phe863 lie on the Extracellular side of the membrane. The tract at residues Ser71–Thr248 is transglycosylase. Glu110 acts as the Proton donor; for transglycosylase activity in catalysis. Positions Ala392 to Asn674 are transpeptidase. The active-site Acyl-ester intermediate; for transpeptidase activity is the Ser431. The segment at Asp774–Phe863 is disordered. The span at Glu808–Thr836 shows a compositional bias: polar residues. Positions Lys837–Lys846 are enriched in basic and acidic residues. Basic residues predominate over residues Lys847–Phe863.

It in the N-terminal section; belongs to the glycosyltransferase 51 family. This sequence in the C-terminal section; belongs to the transpeptidase family.

The protein localises to the cell membrane. It carries out the reaction [GlcNAc-(1-&gt;4)-Mur2Ac(oyl-L-Ala-gamma-D-Glu-L-Lys-D-Ala-D-Ala)](n)-di-trans,octa-cis-undecaprenyl diphosphate + beta-D-GlcNAc-(1-&gt;4)-Mur2Ac(oyl-L-Ala-gamma-D-Glu-L-Lys-D-Ala-D-Ala)-di-trans,octa-cis-undecaprenyl diphosphate = [GlcNAc-(1-&gt;4)-Mur2Ac(oyl-L-Ala-gamma-D-Glu-L-Lys-D-Ala-D-Ala)](n+1)-di-trans,octa-cis-undecaprenyl diphosphate + di-trans,octa-cis-undecaprenyl diphosphate + H(+). The enzyme catalyses Preferential cleavage: (Ac)2-L-Lys-D-Ala-|-D-Ala. Also transpeptidation of peptidyl-alanyl moieties that are N-acyl substituents of D-alanine.. The protein operates within cell wall biogenesis; peptidoglycan biosynthesis. In terms of biological role, cell wall formation. Synthesis of cross-linked peptidoglycan from the lipid intermediates. The enzyme has a penicillin-insensitive transglycosylase N-terminal domain (formation of linear glycan strands) and a penicillin-sensitive transpeptidase C-terminal domain (cross-linking of the peptide subunits). This Clostridium novyi (strain NT) protein is Penicillin-binding protein 1A (pbpA).